A 51-amino-acid chain; its full sequence is Ovomucoid (51 aa).

Residues 3–51 enclose the Kazal-like domain; sequence VDCSGYPKPACTLEYFPLCGSDNQTYANKCTFCNAVVEKNVTLNHLGEC. Intrachain disulfides connect cysteine 5–cysteine 35, cysteine 13–cysteine 32, and cysteine 21–cysteine 51. N-linked (GlcNAc...) asparagine glycosylation is present at asparagine 42.

Its subcellular location is the secreted. The polypeptide is Ovomucoid (Nothoprocta perdicaria (Chilean tinamou)).